The sequence spans 409 residues: Peptidase T (409 aa).

H78 lines the Zn(2+) pocket. D80 is a catalytic residue. D140 provides a ligand contact to Zn(2+). The active-site Proton acceptor is E173. Positions 174, 196, and 379 each coordinate Zn(2+).

It belongs to the peptidase M20B family. Requires Zn(2+) as cofactor.

The protein localises to the cytoplasm. It carries out the reaction Release of the N-terminal residue from a tripeptide.. Functionally, cleaves the N-terminal amino acid of tripeptides. This chain is Peptidase T, found in Escherichia coli (strain SE11).